The chain runs to 230 residues: Ribose-5-phosphate isomerase A (230 aa).

Substrate contacts are provided by residues 32 to 35 (TGST), 85 to 88 (DGAD), and 98 to 101 (KGGG). Glu107 functions as the Proton acceptor in the catalytic mechanism. Substrate is bound at residue Lys125.

It belongs to the ribose 5-phosphate isomerase family. Homodimer.

The enzyme catalyses aldehydo-D-ribose 5-phosphate = D-ribulose 5-phosphate. Its pathway is carbohydrate degradation; pentose phosphate pathway; D-ribose 5-phosphate from D-ribulose 5-phosphate (non-oxidative stage): step 1/1. Its function is as follows. Catalyzes the reversible conversion of ribose-5-phosphate to ribulose 5-phosphate. The chain is Ribose-5-phosphate isomerase A from Burkholderia ambifaria (strain MC40-6).